The primary structure comprises 100 residues: Small ribosomal subunit protein uS14c (100 aa).

The protein belongs to the universal ribosomal protein uS14 family. As to quaternary structure, part of the 30S ribosomal subunit.

It localises to the plastid. Its subcellular location is the chloroplast. Binds 16S rRNA, required for the assembly of 30S particles. This Chlamydomonas reinhardtii (Chlamydomonas smithii) protein is Small ribosomal subunit protein uS14c.